Reading from the N-terminus, the 162-residue chain is Transcription antitermination protein NusB (162 aa).

This sequence belongs to the NusB family.

Functionally, involved in transcription antitermination. Required for transcription of ribosomal RNA (rRNA) genes. Binds specifically to the boxA antiterminator sequence of the ribosomal RNA (rrn) operons. The sequence is that of Transcription antitermination protein NusB from Xanthomonas euvesicatoria pv. vesicatoria (strain 85-10) (Xanthomonas campestris pv. vesicatoria).